A 108-amino-acid polypeptide reads, in one-letter code: Probable chaperone-like protein YdbL (108 aa).

Residues 1–21 (MKKTLLLCAFLVGLVSSNVMA) form the signal peptide.

The protein localises to the periplasm. Probably acts as a chaperone-like protein that contributes to, but is not required for, the formation of the YdbH-YnbE intermembrane bridge. Affects the function and the structure of the YdbH-YnbE complex. Overexpression of ydbL causes a negative effect on YdbH-YnbE function. This is Probable chaperone-like protein YdbL (ydbL) from Escherichia coli (strain K12).